A 398-amino-acid chain; its full sequence is MTKTFRTLDDVDVKGKRVLLRVDLNVPMDAGKVTDTTRLERVMPTITELSGKGAKVILLAHFGRPKGRDDKNSLKPVAAALADVIKKPVGFADDCIGEPAAKAIAAMADGDILCLENTRFHPEEEKNDPAFVAKLAELGDIWVNDAFSAAHRAHATTEGLGHKLPAYAGRTMQAELVALNKALEAPVKPVIAIVGGAKVSTKIDLLENLVTKVQALVIGGGMANTFLHAQGVKVGKSLCEKDLAPTALRILDKAEAANCAIILPVDATVAYHFEANAPSFAYGLDAIPDDAMILDVGPRSIERIHAAIDDAATLVWNGPVGAFELTPFDKGTVEAAKHAAKRTKAGKLVSVAGGGDTVAALNHAGVADDFTYISTAGGAFLEWMEGKPLPGVEVLQVK.

Residues 23-25, Arg38, 61-64, Arg119, and Arg152 contribute to the substrate site; these read DLN and HFGR. ATP contacts are provided by residues Lys202, Glu324, and 354–357; that span reads GGDT.

The protein belongs to the phosphoglycerate kinase family. Monomer.

The protein resides in the cytoplasm. The enzyme catalyses (2R)-3-phosphoglycerate + ATP = (2R)-3-phospho-glyceroyl phosphate + ADP. It participates in carbohydrate degradation; glycolysis; pyruvate from D-glyceraldehyde 3-phosphate: step 2/5. The chain is Phosphoglycerate kinase from Rhodopseudomonas palustris (strain ATCC BAA-98 / CGA009).